Reading from the N-terminus, the 38-residue chain is Spheniscin-1 (38 aa).

Intrachain disulfides connect cysteine 5-cysteine 33, cysteine 12-cysteine 27, and cysteine 17-cysteine 34.

Monomer. In terms of tissue distribution, secreted into the stomach cavity.

It localises to the secreted. Functionally, has antifungal activity and antibacterial activity against Gram-positive and Gram-negative bacteria. Involved in the process of food preservation in the stomach during the incubation fast. May also be present during infection. This chain is Spheniscin-1, found in Aptenodytes patagonicus (King penguin).